The sequence spans 1170 residues: MASNGGGGLRHSNSSRLSRMSYSGEDGRSQAPGGGGDRPMVTFARRTHSGRYVSYSRDDLDSELGNSGDMSPESGQEFLNYHVTIPATPDNQPMDPAISARVEEQYVSNSLFTGGFNSVTRAHLMDKVIESEASHPQMAGAKGSSCAINGCDAKVMSDERGDDILPCECDFKICADCFADAVKNGGACPGCKDPYKATELDDVVGARPTLSLPPPPGGLPASRMERRLSIMRSQKAMTRSQTGDWDHNRWLFETKGTYGYGNAIWPKENEVDNGGGGGGGGGLGGGDGQPAEFTSKPWRPLTRKLKIPAGVLSPYRLLILIRMAVLGLFLAWRIKHKNEDAMWLWGMSVVCELWFGLSWLLDQLPKLCPVNRATDLAVLKDKFETPTPSNPNGRSDLPGLDIFVSTADPEKEPPLVTANTILSILAADYPVEKLSCYVSDDGGALLTFEAMAEAASFANMWVPFCRKHDIEPRNPESYFNLKRDPYKNKVRSDFVKDRRRVKREYDEFKVRINSLPDSIRRRSDAYHAREEIKAMKRQREAALDDVVEAVKIPKATWMADGTHWPGTWIQPSAEHARGDHAGIIQVMLKPPSDDPLYGTSSEEGRPLDFTEVDIRLPMLVYVSREKRPGYDHNKKAGAMNALVRSSAVMSNGPFILNLDCDHYVYNSQAFREGMCFMMDRGGDRIGYVQFPQRFEGIDPSDRYANHNTVFFDVNMRALDGIMGPVYVGTGCLFRRIALYGFDPPRSKEHSGCCSCCFPQRRKVKTSTVASEERQALRMADFDDEEMNMSQFPKKFGNSNFLINSIPIAEFQGRPLADHPGVKNGRPPGALTVPRDLLDASTVAEAISVISCWYEDKTEWGQRVGWIYGSVTEDVVTGYRMHNRGWKSVYCVTKRDAFRGTAPINLTDRLHQVLRWATGSVEIFFSRNNALLASRKMKFLQRIAYLNVGIYPFTSIFLIVYCFLPALSLFSGQFIVRTLNVTFLTYLLVITLTMCMLAVLEIKWSGISLEEWWRNEQFWLIGGTSAHLAAVLQGLLKVIAGIEISFTLTSKSGGDEADDEFADLYIVKWTSLMIPPIVIMMVNLIAIAVGFSRTIYSEIPQWSKLLGGVFFSFWVLAHLYPFAKGLMGRRGRTPTIVFVWSGLLAITISLLWVAINPPSQNSQIGGSFTFP.

2 disordered regions span residues 1–75 and 269–295; these read MASN…PESG and NEVD…EFTS. Over residues 10–24 the composition is skewed to low complexity; the sequence is RHSNSSRLSRMSYSG. Positions 273-288 are enriched in gly residues; it reads NGGGGGGGGGLGGGDG. 2 consecutive transmembrane segments (helical) span residues 311–331 and 341–361; these read VLSP…LFLA and AMWL…SWLL. Aspartate 441 is a catalytic residue. The stretch at 527–551 forms a coiled coil; that stretch reads HAREEIKAMKRQREAALDDVVEAVK. Aspartate 873 is an active-site residue. The next 6 helical transmembrane spans lie at 955 to 975, 981 to 1001, 1027 to 1047, 1070 to 1090, 1104 to 1124, and 1134 to 1154; these read IFLI…QFIV, TFLT…VLEI, LAAV…SFTL, SLMI…AVGF, LLGG…FAKG, and TIVF…WVAI.

Belongs to the glycosyltransferase 2 family. Plant cellulose synthase-like D subfamily.

The protein resides in the golgi apparatus membrane. Thought to be a Golgi-localized beta-glycan synthase that polymerize the backbones of noncellulosic polysaccharides (hemicelluloses) of plant cell wall. The chain is Cellulose synthase-like protein D2 (CSLD2) from Oryza sativa subsp. indica (Rice).